We begin with the raw amino-acid sequence, 360 residues long: Phospho-N-acetylmuramoyl-pentapeptide-transferase (360 aa).

Transmembrane regions (helical) follow at residues 26–46 (AILS…IMIK), 70–90 (GTPT…ILLW), 94–114 (SNPY…IGFV), 132–152 (WKYF…YAYG), 168–188 (IMPQ…VGTS), 199–219 (GLAI…AWAT), 236–256 (ASEL…FLWF), 263–283 (VFMG…IAVL), 288–308 (LILV…ILQV), and 338–358 (VIVR…ATLK).

It belongs to the glycosyltransferase 4 family. MraY subfamily. Mg(2+) serves as cofactor.

The protein resides in the cell inner membrane. It catalyses the reaction UDP-N-acetyl-alpha-D-muramoyl-L-alanyl-gamma-D-glutamyl-meso-2,6-diaminopimeloyl-D-alanyl-D-alanine + di-trans,octa-cis-undecaprenyl phosphate = di-trans,octa-cis-undecaprenyl diphospho-N-acetyl-alpha-D-muramoyl-L-alanyl-D-glutamyl-meso-2,6-diaminopimeloyl-D-alanyl-D-alanine + UMP. It participates in cell wall biogenesis; peptidoglycan biosynthesis. Its function is as follows. Catalyzes the initial step of the lipid cycle reactions in the biosynthesis of the cell wall peptidoglycan: transfers peptidoglycan precursor phospho-MurNAc-pentapeptide from UDP-MurNAc-pentapeptide onto the lipid carrier undecaprenyl phosphate, yielding undecaprenyl-pyrophosphoryl-MurNAc-pentapeptide, known as lipid I. The protein is Phospho-N-acetylmuramoyl-pentapeptide-transferase of Vibrio campbellii (strain ATCC BAA-1116).